Reading from the N-terminus, the 436-residue chain is MSDRQQVTNAKGERIAIVAGLRTPFAKQATAFHGVSALDMGKMVVNELLARSELDPKLIEQLVYGQVVQMPAAPNIAREIVLGTGMNVSTDAYSVTRACATSFQSTVNVAESIMTGNIDIGIAGGADSSSVLPIGVSKKLAHALVDLNKARSFGQKLQIFRRLGLKDLLPVPPAVAEYSTGLSMGQTAEQMAKTYNISRADQDALAHRSHTLASETWASGHLRDEVMVAHIPPYKQFIDRDNNIRENSVLESYAKLRPAFDKQHGTVTAANSTPLTDGASAIILMSEGRAKALGYQPIGYIKSYAFSAIDVWQDMLMGPSYATPLALKRAGMELEDLTLIEMHEAFAAQTLANMQMFASKKFAEEKLGRNRPIGEIDMSKFNVLGGSLAYGHPFAATGTRLITQVCRELKRRGGGTGLTTACAAGGLGVAMIVEVE.

C99 serves as the catalytic Acyl-thioester intermediate. Catalysis depends on proton acceptor residues H392 and C422.

Belongs to the thiolase-like superfamily. Thiolase family. In terms of assembly, heterotetramer of two alpha chains (FadJ) and two beta chains (FadI).

The protein localises to the cytoplasm. It catalyses the reaction an acyl-CoA + acetyl-CoA = a 3-oxoacyl-CoA + CoA. It functions in the pathway lipid metabolism; fatty acid beta-oxidation. Its function is as follows. Catalyzes the final step of fatty acid oxidation in which acetyl-CoA is released and the CoA ester of a fatty acid two carbons shorter is formed. This Shewanella sp. (strain W3-18-1) protein is 3-ketoacyl-CoA thiolase.